A 440-amino-acid polypeptide reads, in one-letter code: Asparagine--tRNA ligase (440 aa).

It belongs to the class-II aminoacyl-tRNA synthetase family. In terms of assembly, homodimer.

It is found in the cytoplasm. The enzyme catalyses tRNA(Asn) + L-asparagine + ATP = L-asparaginyl-tRNA(Asn) + AMP + diphosphate + H(+). This chain is Asparagine--tRNA ligase, found in Roseiflexus castenholzii (strain DSM 13941 / HLO8).